The primary structure comprises 104 residues: Thioredoxin (104 aa).

The Thioredoxin domain occupies 2-104 (KQVSDASFEE…KLFEWVEASV (103 aa)). A disulfide bridge connects residues cysteine 29 and cysteine 32.

Belongs to the thioredoxin family.

In terms of biological role, participates in various redox reactions through the reversible oxidation of its active center dithiol to a disulfide and catalyzes dithiol-disulfide exchange reactions. The chain is Thioredoxin (trxA) from Rhodospirillum rubrum.